The chain runs to 430 residues: Enolase (430 aa).

Position 163 (Q163) interacts with (2R)-2-phosphoglycerate. E205 acts as the Proton donor in catalysis. Residues D242, E288, and D315 each coordinate Mg(2+). The (2R)-2-phosphoglycerate site is built by K340, R369, S370, and K391. K340 functions as the Proton acceptor in the catalytic mechanism.

The protein belongs to the enolase family. Mg(2+) serves as cofactor.

The protein resides in the cytoplasm. Its subcellular location is the secreted. It is found in the cell surface. The catalysed reaction is (2R)-2-phosphoglycerate = phosphoenolpyruvate + H2O. It functions in the pathway carbohydrate degradation; glycolysis; pyruvate from D-glyceraldehyde 3-phosphate: step 4/5. In terms of biological role, catalyzes the reversible conversion of 2-phosphoglycerate (2-PG) into phosphoenolpyruvate (PEP). It is essential for the degradation of carbohydrates via glycolysis. The protein is Enolase of Aster yellows witches'-broom phytoplasma (strain AYWB).